The sequence spans 299 residues: NEDD8-activating enzyme E1 catalytic subunit (299 aa).

12-37 (GLGCEILKNLTMLSFVKQVHIVDIDT) contributes to the ATP binding site. C168 serves as the catalytic Glycyl thioester intermediate.

This sequence belongs to the ubiquitin-activating E1 family. UBA3 subfamily. Heterodimer of UBA3 and ULA1. Interacts with NEDD8 and UBC12.

The catalysed reaction is ATP + [NEDD8 protein] + [E1 NEDD8-activating enzyme]-L-cysteine = AMP + diphosphate + [E1 NEDD8-activating enzyme]-S-[NEDD8 protein]-yl-L-cysteine.. It functions in the pathway protein modification; protein neddylation. Catalytic subunit of the dimeric UBA3-ULA1 E1 enzyme. E1 activates NEDD8/RUB1 by first adenylating its C-terminal glycine residue with ATP, thereafter linking this residue to the side chain of the catalytic cysteine, yielding a NEDD8-UBA3 thioester and free AMP. E1 finally transfers NEDD8 to the catalytic cysteine of UBC12. This chain is NEDD8-activating enzyme E1 catalytic subunit (UBA3), found in Saccharomyces cerevisiae (strain ATCC 204508 / S288c) (Baker's yeast).